The chain runs to 839 residues: Probable inorganic carbon transporter subunit DabA (839 aa).

4 residues coordinate Zn(2+): C353, D355, H537, and C552.

This sequence belongs to the inorganic carbon transporter (TC 9.A.2) DabA family. In terms of assembly, forms a complex with DabB. The cofactor is Zn(2+).

The protein resides in the cell membrane. Its function is as follows. Part of an energy-coupled inorganic carbon pump. The polypeptide is Probable inorganic carbon transporter subunit DabA (Chloroflexus aggregans (strain MD-66 / DSM 9485)).